The chain runs to 330 residues: Phosphate acyltransferase (330 aa).

The protein belongs to the PlsX family. In terms of assembly, homodimer. Probably interacts with PlsY.

Its subcellular location is the cytoplasm. The catalysed reaction is a fatty acyl-[ACP] + phosphate = an acyl phosphate + holo-[ACP]. Its pathway is lipid metabolism; phospholipid metabolism. Its function is as follows. Catalyzes the reversible formation of acyl-phosphate (acyl-PO(4)) from acyl-[acyl-carrier-protein] (acyl-ACP). This enzyme utilizes acyl-ACP as fatty acyl donor, but not acyl-CoA. The chain is Phosphate acyltransferase from Lactobacillus delbrueckii subsp. bulgaricus (strain ATCC BAA-365 / Lb-18).